Here is a 73-residue protein sequence, read N- to C-terminus: Large ribosomal subunit protein bL31 (73 aa).

It belongs to the bacterial ribosomal protein bL31 family. Type A subfamily. Part of the 50S ribosomal subunit.

In terms of biological role, binds the 23S rRNA. In Sinorhizobium fredii (strain NBRC 101917 / NGR234), this protein is Large ribosomal subunit protein bL31.